A 304-amino-acid chain; its full sequence is dTDP-4-dehydrorhamnose reductase (304 aa).

NADH-binding positions include 16-18 (GML), 42-43 (DI), and 66-68 (AWT). Residues 17–18 (ML), 42–43 (DI), and 66–68 (AWT) each bind NADPH. 107–108 (TD) lines the dTDP-beta-L-rhamnose pocket. NADH-binding residues include tyrosine 131 and lysine 135. Positions 131 and 135 each coordinate NADPH. The active-site Proton donor/acceptor is the tyrosine 131. A dTDP-beta-L-rhamnose-binding site is contributed by tryptophan 157.

The protein belongs to the dTDP-4-dehydrorhamnose reductase family. In terms of assembly, homodimer. Mg(2+) serves as cofactor.

It carries out the reaction dTDP-beta-L-rhamnose + NADP(+) = dTDP-4-dehydro-beta-L-rhamnose + NADPH + H(+). Its pathway is carbohydrate biosynthesis; dTDP-L-rhamnose biosynthesis. The protein operates within antibiotic biosynthesis; streptomycin biosynthesis. Involved in the biosynthesis of the streptose moiety of streptomycin. Catalyzes the reduction of dTDP-6-deoxy-L-lyxo-4-hexulose to yield dTDP-L-rhamnose. RmlD uses NADH and NADPH nearly equally well. In Streptomyces griseus, this protein is dTDP-4-dehydrorhamnose reductase.